Consider the following 496-residue polypeptide: Cytochrome P450 71A15 (496 aa).

Residues 3-23 (IIIISLCLATILAFLLLKPLL) form a helical membrane-spanning segment. Cys439 contributes to the heme binding site.

The protein belongs to the cytochrome P450 family. Requires heme as cofactor.

The protein localises to the membrane. The sequence is that of Cytochrome P450 71A15 (CYP71A15) from Arabidopsis thaliana (Mouse-ear cress).